Consider the following 333-residue polypeptide: Holliday junction branch migration complex subunit RuvB (333 aa).

The tract at residues 1 to 182 is large ATPase domain (RuvB-L); sequence MDERLLSGES…FGVLSRLEYY (182 aa). Residues Leu-21, Arg-22, Gly-63, Lys-66, Thr-67, Thr-68, 129–131, Arg-172, Tyr-182, and Arg-219 each bind ATP; that span reads EDF. Mg(2+) is bound at residue Thr-67. The interval 183–253 is small ATPAse domain (RuvB-S); it reads TVDQLSAIVE…ITQMALELLQ (71 aa). Residues 256-333 form a head domain (RuvB-H) region; sequence KLGLDHIDHK…EHFGMEIPKV (78 aa). DNA contacts are provided by Arg-311 and Arg-316.

This sequence belongs to the RuvB family. Homohexamer. Forms an RuvA(8)-RuvB(12)-Holliday junction (HJ) complex. HJ DNA is sandwiched between 2 RuvA tetramers; dsDNA enters through RuvA and exits via RuvB. An RuvB hexamer assembles on each DNA strand where it exits the tetramer. Each RuvB hexamer is contacted by two RuvA subunits (via domain III) on 2 adjacent RuvB subunits; this complex drives branch migration. In the full resolvosome a probable DNA-RuvA(4)-RuvB(12)-RuvC(2) complex forms which resolves the HJ.

It is found in the cytoplasm. It catalyses the reaction ATP + H2O = ADP + phosphate + H(+). In terms of biological role, the RuvA-RuvB-RuvC complex processes Holliday junction (HJ) DNA during genetic recombination and DNA repair, while the RuvA-RuvB complex plays an important role in the rescue of blocked DNA replication forks via replication fork reversal (RFR). RuvA specifically binds to HJ cruciform DNA, conferring on it an open structure. The RuvB hexamer acts as an ATP-dependent pump, pulling dsDNA into and through the RuvAB complex. RuvB forms 2 homohexamers on either side of HJ DNA bound by 1 or 2 RuvA tetramers; 4 subunits per hexamer contact DNA at a time. Coordinated motions by a converter formed by DNA-disengaged RuvB subunits stimulates ATP hydrolysis and nucleotide exchange. Immobilization of the converter enables RuvB to convert the ATP-contained energy into a lever motion, pulling 2 nucleotides of DNA out of the RuvA tetramer per ATP hydrolyzed, thus driving DNA branch migration. The RuvB motors rotate together with the DNA substrate, which together with the progressing nucleotide cycle form the mechanistic basis for DNA recombination by continuous HJ branch migration. Branch migration allows RuvC to scan DNA until it finds its consensus sequence, where it cleaves and resolves cruciform DNA. The sequence is that of Holliday junction branch migration complex subunit RuvB from Bacillus cereus (strain B4264).